The sequence spans 369 residues: Putative agmatine deiminase (369 aa).

The active-site Amidino-cysteine intermediate is the C355.

This sequence belongs to the agmatine deiminase family.

The enzyme catalyses agmatine + H2O = N-carbamoylputrescine + NH4(+). In Marinomonas sp. (strain MWYL1), this protein is Putative agmatine deiminase.